Consider the following 95-residue polypeptide: Progonadoliberin-1 (95 aa).

The first 23 residues, 1-23, serve as a signal peptide directing secretion; that stretch reads MAPQTSNLWLLLVVMMVMSQGCC. Q24 carries the pyrrolidone carboxylic acid modification. A Glycine amide modification is found at G33.

This sequence belongs to the GnRH family.

It is found in the secreted. Stimulates the secretion of gonadotropins. This is Progonadoliberin-1 (gnrh1) from Pagrus major (Red sea bream).